The following is a 61-amino-acid chain: Metallothionein-2 (61 aa).

The residue at position 1 (M1) is an N-acetylmethionine. The tract at residues 1–29 (MDPNCSCATDGSCSCAGSCKCKQCKCTSC) is beta. A divalent metal cation is bound by residues C5, C7, C13, C15, C19, C21, C24, C26, C29, C33, C34, C36, C37, C41, C44, C48, C50, and C57. The tract at residues 30-61 (KKSCCSCCPVGCAKCSQGCICKEASDKCSCCA) is alpha. At S58 the chain carries Phosphoserine. A divalent metal cation contacts are provided by C59 and C60.

Belongs to the metallothionein superfamily. Type 1 family.

Metallothioneins have a high content of cysteine residues that bind various heavy metals; these proteins are transcriptionally regulated by both heavy metals and glucocorticoids. The chain is Metallothionein-2 (Mt2) from Rattus norvegicus (Rat).